The sequence spans 124 residues: ATP synthase epsilon chain (124 aa).

A compositionally biased stretch (basic and acidic residues) spans 99–118; the sequence is LEQAKTEGDAHAERRADVRL. The interval 99–124 is disordered; sequence LEQAKTEGDAHAERRADVRLRAAAGR.

The protein belongs to the ATPase epsilon chain family. In terms of assembly, F-type ATPases have 2 components, CF(1) - the catalytic core - and CF(0) - the membrane proton channel. CF(1) has five subunits: alpha(3), beta(3), gamma(1), delta(1), epsilon(1). CF(0) has three main subunits: a, b and c.

Its subcellular location is the cell membrane. Its function is as follows. Produces ATP from ADP in the presence of a proton gradient across the membrane. The sequence is that of ATP synthase epsilon chain (atpC) from Streptomyces coelicolor (strain ATCC BAA-471 / A3(2) / M145).